The chain runs to 2209 residues: Orsellinic acid synthase armB (2209 aa).

Residues 38–261 (LLLDACYYAF…HKTTVDALYH (224 aa)) are N-terminal acylcarrier protein transacylase domain (SAT). The region spanning 391–817 (QEPIAICGMS…GSNGALLLEE (427 aa)) is the Ketosynthase family 3 (KS3) domain. Catalysis depends on for beta-ketoacyl synthase activity residues Cys561, His696, and His736. A malonyl-CoA:ACP transacylase (MAT) domain region spans residues 914 to 1239 (VFVFSGQGGQ…NLTLSSSLSQ (326 aa)). Ser1008 serves as the catalytic For acyl/malonyl transferase activity. Residues 1306 to 1436 (MLQSWAQFPS…GQFRPLLVAD (131 aa)) form an N-terminal hotdog fold region. One can recognise a PKS/mFAS DH domain in the interval 1306–1613 (MLQSWAQFPS…FKKLRLNTLQ (308 aa)). A product template (PT) domain region spans residues 1335-1610 (ITGHIVGDVP…GMCFKKLRLN (276 aa)). His1338 serves as the catalytic Proton acceptor; for dehydratase activity. A C-terminal hotdog fold region spans residues 1463–1613 (AEVITTRTAY…FKKLRLNTLQ (151 aa)). The Proton donor; for dehydratase activity role is filled by Asp1524. Carrier domains lie at 1659–1734 (VDVQ…SSTI) and 1844–1921 (SSSS…SSKQ). Residues Ser1693 and Ser1881 each carry the O-(pantetheine 4'-phosphoryl)serine modification. Residues 1917–1945 (ISSKQPGKSPKPSEEATMDPDKEEDLSDL) form a disordered region. Residues 1932–1943 (ATMDPDKEEDLS) show a composition bias toward acidic residues. The tract at residues 1962-2201 (VPMSVQKSSS…LGAVTQALVD (240 aa)) is thioesterase (TE) domain.

It catalyses the reaction 3 malonyl-CoA + acetyl-CoA + 2 H(+) = orsellinate + 3 CO2 + 4 CoA. Its pathway is secondary metabolite biosynthesis. Non-reducing polyketide synthase, part of the gene cluster that mediates the biosynthesis of melleolides, a range of antifungal and phytotoxic polyketide derivatives composed of an orsellinic acid (OA) moiety esterified to various sesquiterpene alcohols. The first step in melleolides biosynthesis is performed by the delta(6)-protoilludene synthase PRO1 which catalyzes the cyclization of farnesyl diphosphate to protoilludene. The orsellinic acid synthase armB produces OA by condensing acetyl-CoA with 3 malonyl-CoA units in a three-round chain elongation reaction folowed by a C2-C7 ring closure. ArmB further catalyzes the trans-esterification of OA to the various sesquiterpene alcohols resulting from the hydroxylation of protoilludene. The melleolides cluster also includes 5 cytochrome P450 monooxygenases, 4 NAD(+)-dependent oxidoreductases, one flavin-dependent oxidoreductase, and one O-methyltransferase. The cytochrome P450 monooxygenases may be involved in protoilludene hydroxylation to elaborate melleolides with multiple alcohol groups, such as melleolide D, which carries alcohol functionalities at C-4, C-5, C-10, and C-13. The role of the NAD(+)-dependent enzymes remains unknown. Numerous melleolides, including arnamial, show 5'-O-methylation of the aromatic moiety which may be catalyzed by the methyltransferase encoded in the cluster. The flavin-dependent oxidoreductase might represent the dehydrogenase yielding the aldehyde in position 1 of arnamial and other melleolides. Finally, several halogenase localized outside of the cluster (armH1 to armH5), are able to catalyze the transfer of a single chlorine atom to the melleolide backbone, resulting in a 6'-chloromelleolide product. This chain is Orsellinic acid synthase armB, found in Armillaria mellea (Honey mushroom).